The sequence spans 344 residues: Estradiol 17-beta-dehydrogenase 1 (344 aa).

Residue 3–32 (STVVLITGCSSGIGLHLAVRLASDRSQSFK) coordinates NAD(+). Ser143 is a substrate binding site. Catalysis depends on Tyr156, which acts as the Proton acceptor.

Belongs to the short-chain dehydrogenases/reductases (SDR) family. Homodimer.

It is found in the cytoplasm. It carries out the reaction 17beta-estradiol + NAD(+) = estrone + NADH + H(+). The enzyme catalyses 17beta-estradiol + NADP(+) = estrone + NADPH + H(+). Its pathway is steroid biosynthesis; estrogen biosynthesis. Favors the reduction of estrogens and androgens. Uses preferentially NADH. The polypeptide is Estradiol 17-beta-dehydrogenase 1 (Hsd17b1) (Rattus norvegicus (Rat)).